We begin with the raw amino-acid sequence, 414 residues long: Histidine--tRNA ligase (414 aa).

The protein belongs to the class-II aminoacyl-tRNA synthetase family. As to quaternary structure, homodimer.

The protein localises to the cytoplasm. It carries out the reaction tRNA(His) + L-histidine + ATP = L-histidyl-tRNA(His) + AMP + diphosphate + H(+). This is Histidine--tRNA ligase from Pelobacter propionicus (strain DSM 2379 / NBRC 103807 / OttBd1).